Consider the following 144-residue polypeptide: Large ribosomal subunit protein uL13 (144 aa).

The protein belongs to the universal ribosomal protein uL13 family. Part of the 50S ribosomal subunit.

This protein is one of the early assembly proteins of the 50S ribosomal subunit, although it is not seen to bind rRNA by itself. It is important during the early stages of 50S assembly. This Clostridium botulinum (strain ATCC 19397 / Type A) protein is Large ribosomal subunit protein uL13.